The chain runs to 330 residues: tRNA dimethylallyltransferase (330 aa).

Residues 1–11 (MDYSHSDSPST) are compositionally biased toward polar residues. Residues 1-21 (MDYSHSDSPSTAPAGKTPVDQ) form a disordered region. 29-36 (GPTGAGKS) contacts ATP. 31 to 36 (TGAGKS) serves as a coordination point for substrate. Residues 56–59 (DSMQ) are interaction with substrate tRNA.

Belongs to the IPP transferase family. Monomer. Mg(2+) is required as a cofactor.

It catalyses the reaction adenosine(37) in tRNA + dimethylallyl diphosphate = N(6)-dimethylallyladenosine(37) in tRNA + diphosphate. Catalyzes the transfer of a dimethylallyl group onto the adenine at position 37 in tRNAs that read codons beginning with uridine, leading to the formation of N6-(dimethylallyl)adenosine (i(6)A). The chain is tRNA dimethylallyltransferase from Corynebacterium urealyticum (strain ATCC 43042 / DSM 7109).